Consider the following 106-residue polypeptide: Small ribosomal subunit protein uS17 (106 aa).

Belongs to the universal ribosomal protein uS17 family. As to quaternary structure, part of the 30S ribosomal subunit.

Its function is as follows. One of the primary rRNA binding proteins, it binds specifically to the 5'-end of 16S ribosomal RNA. The protein is Small ribosomal subunit protein uS17 of Picrophilus torridus (strain ATCC 700027 / DSM 9790 / JCM 10055 / NBRC 100828 / KAW 2/3).